Here is a 59-residue protein sequence, read N- to C-terminus: Potassium channel toxin alpha-KTx 4.1 (59 aa).

An N-terminal signal peptide occupies residues Met1–Gln22. 3 disulfides stabilise this stretch: Cys29–Cys50, Cys35–Cys55, and Cys39–Cys57. The interaction with Ca(2+)-activated K(+) channels stretch occupies residues Gly48–Cys55.

This sequence belongs to the short scorpion toxin superfamily. Potassium channel inhibitor family. Alpha-KTx 04 subfamily. As to expression, expressed by the venom gland.

It is found in the secreted. Functionally, potently blocks Kv1.1/KCNA1 (85%), Kv1.2/KCNA2 (91%), Kv1.3/KCNA3 (89%), Kv1.6/KCNA6 (94%), and Shaker (97%). This chain is Potassium channel toxin alpha-KTx 4.1, found in Tityus serrulatus (Brazilian scorpion).